We begin with the raw amino-acid sequence, 101 residues long: MFVKKGDKVRVIAGKDKGTEAVVLTALPKVNKVIVEGVNIVKKHQRPTNELPQGGIIEKEAAIHVSNVQVLDKNGVAGRVGYKFVDGKKVRYNKKSGEVLD.

It belongs to the universal ribosomal protein uL24 family. As to quaternary structure, part of the 50S ribosomal subunit.

Its function is as follows. One of two assembly initiator proteins, it binds directly to the 5'-end of the 23S rRNA, where it nucleates assembly of the 50S subunit. One of the proteins that surrounds the polypeptide exit tunnel on the outside of the subunit. This chain is Large ribosomal subunit protein uL24, found in Streptococcus pneumoniae (strain ATCC 700669 / Spain 23F-1).